The following is a 240-amino-acid chain: MLKLLRIFLVLICCILICVLGTIYSFIRFKNPSNVGIVARWFGRLYPLFGLKVEHRIPQDQKQISRAIYIGNHQNNYDMVTISYMVQPRTVSVGKKSLIWIPFFGILYWVTGNIFLDRENRTKAHNTMSQLARRINEDNLSIWMFPEGTRNRGRGLLPFKTGAFHAAISAGVPIIPVVCSSTHNKINLNRWDNGKVICEIMDPIDVSGYTKDNVRDLAAYCHDLMEKRIAELDEEIAKGN.

The HXXXXD motif motif lies at 73 to 78 (HQNNYD).

Belongs to the 1-acyl-sn-glycerol-3-phosphate acyltransferase family.

The protein localises to the cell inner membrane. The catalysed reaction is a 1-acyl-sn-glycero-3-phosphate + an acyl-CoA = a 1,2-diacyl-sn-glycero-3-phosphate + CoA. It functions in the pathway phospholipid metabolism; CDP-diacylglycerol biosynthesis; CDP-diacylglycerol from sn-glycerol 3-phosphate: step 2/3. Functionally, converts lysophosphatidic acid (LPA) into phosphatidic acid by incorporating acyl moiety at the 2 position. The protein is 1-acyl-sn-glycerol-3-phosphate acyltransferase (plsC) of Haemophilus influenzae (strain ATCC 51907 / DSM 11121 / KW20 / Rd).